We begin with the raw amino-acid sequence, 390 residues long: GPI inositol-deacylase (390 aa).

A helical membrane pass occupies residues 21–41; the sequence is FIVYFIICLTIIISALGVYLY. Ser-202 is an active-site residue. A helical membrane pass occupies residues 354 to 374; that stretch reads VHLLSLTIFALKWTIIVLAII.

Belongs to the GPI inositol-deacylase family.

The protein resides in the endoplasmic reticulum membrane. Functionally, involved in inositol deacylation of GPI-anchored proteins which plays important roles in the quality control and ER-associated degradation of GPI-anchored proteins. The sequence is that of GPI inositol-deacylase (BST1) from Candida albicans (strain SC5314 / ATCC MYA-2876) (Yeast).